The following is a 169-amino-acid chain: MANTGDGIILGLDPGSRATGYGLVRERSGVLELVDAGVVRTTSQPDFPSRLGVIFTAVAELIQRHGPAEVSVENVFVSKNAATALKLGQARGAALAACAVAGLSVHSYEPTVIKQSLVGTGRAEKSQVAFMVARVLACRETFAVDATDALAAAVCHLNQRRLTRLCGAR.

Residues D13, E73, and D145 contribute to the active site. D13, E73, and D145 together coordinate Mg(2+).

The protein belongs to the RuvC family. Homodimer which binds Holliday junction (HJ) DNA. The HJ becomes 2-fold symmetrical on binding to RuvC with unstacked arms; it has a different conformation from HJ DNA in complex with RuvA. In the full resolvosome a probable DNA-RuvA(4)-RuvB(12)-RuvC(2) complex forms which resolves the HJ. Mg(2+) is required as a cofactor.

It is found in the cytoplasm. The enzyme catalyses Endonucleolytic cleavage at a junction such as a reciprocal single-stranded crossover between two homologous DNA duplexes (Holliday junction).. Its function is as follows. The RuvA-RuvB-RuvC complex processes Holliday junction (HJ) DNA during genetic recombination and DNA repair. Endonuclease that resolves HJ intermediates. Cleaves cruciform DNA by making single-stranded nicks across the HJ at symmetrical positions within the homologous arms, yielding a 5'-phosphate and a 3'-hydroxyl group; requires a central core of homology in the junction. The consensus cleavage sequence is 5'-(A/T)TT(C/G)-3'. Cleavage occurs on the 3'-side of the TT dinucleotide at the point of strand exchange. HJ branch migration catalyzed by RuvA-RuvB allows RuvC to scan DNA until it finds its consensus sequence, where it cleaves and resolves the cruciform DNA. The protein is Crossover junction endodeoxyribonuclease RuvC of Solidesulfovibrio magneticus (strain ATCC 700980 / DSM 13731 / RS-1) (Desulfovibrio magneticus).